The chain runs to 154 residues: S-protein homolog 12 (154 aa).

Positions 1–30 (MGTNKIPKTLNGNLVLILIITIMMVTHSHG) are cleaved as a signal peptide.

The protein belongs to the plant self-incompatibility (S1) protein family.

It is found in the secreted. This Arabidopsis thaliana (Mouse-ear cress) protein is S-protein homolog 12.